Reading from the N-terminus, the 320-residue chain is Lipoyl synthase (320 aa).

Residues Cys56, Cys61, Cys67, Cys82, Cys86, Cys89, and Ser295 each coordinate [4Fe-4S] cluster. In terms of domain architecture, Radical SAM core spans 68-284; the sequence is WNRRTATFMI…REEALKRGFA (217 aa). The tract at residues 300-320 is disordered; the sequence is EQSAQAVARRTGAGRAAQTGD. Residues 303-320 show a composition bias toward low complexity; sequence AQAVARRTGAGRAAQTGD.

This sequence belongs to the radical SAM superfamily. Lipoyl synthase family. The cofactor is [4Fe-4S] cluster.

The protein resides in the cytoplasm. The enzyme catalyses [[Fe-S] cluster scaffold protein carrying a second [4Fe-4S](2+) cluster] + N(6)-octanoyl-L-lysyl-[protein] + 2 oxidized [2Fe-2S]-[ferredoxin] + 2 S-adenosyl-L-methionine + 4 H(+) = [[Fe-S] cluster scaffold protein] + N(6)-[(R)-dihydrolipoyl]-L-lysyl-[protein] + 4 Fe(3+) + 2 hydrogen sulfide + 2 5'-deoxyadenosine + 2 L-methionine + 2 reduced [2Fe-2S]-[ferredoxin]. Its pathway is protein modification; protein lipoylation via endogenous pathway; protein N(6)-(lipoyl)lysine from octanoyl-[acyl-carrier-protein]: step 2/2. Its function is as follows. Catalyzes the radical-mediated insertion of two sulfur atoms into the C-6 and C-8 positions of the octanoyl moiety bound to the lipoyl domains of lipoate-dependent enzymes, thereby converting the octanoylated domains into lipoylated derivatives. This Symbiobacterium thermophilum (strain DSM 24528 / JCM 14929 / IAM 14863 / T) protein is Lipoyl synthase.